Here is a 466-residue protein sequence, read N- to C-terminus: 55 kDa erythrocyte membrane protein (466 aa).

T2 is subject to N-acetylthreonine. S13 and S19 each carry phosphoserine. The residue at position 49 (T49) is a Phosphothreonine. S52, S57, and S110 each carry phosphoserine. Residues L71–Q152 enclose the PDZ domain. The region spanning A158–V228 is the SH3 domain. S243 is modified (phosphoserine). Residues V268 to Y466 are interaction with PALS1. A Guanylate kinase-like domain is found at R282–D451.

This sequence belongs to the MAGUK family. In terms of assembly, heterodimer with PALS1. Interacts with DLG5 and NF2. Interacts (via guanylate kinase-like domain) with WHRN (via third PDZ domain). In terms of processing, palmitoylated.

It is found in the cell membrane. The protein resides in the cell projection. The protein localises to the stereocilium. Functionally, essential regulator of neutrophil polarity. Regulates neutrophil polarization by regulating AKT1 phosphorylation through a mechanism that is independent of PIK3CG activity. This is 55 kDa erythrocyte membrane protein (MPP1) from Pongo abelii (Sumatran orangutan).